A 198-amino-acid chain; its full sequence is 7-methyl-GTP pyrophosphatase (198 aa).

Residue Asp-72 is the Proton acceptor of the active site.

Belongs to the Maf family. YceF subfamily. Requires a divalent metal cation as cofactor.

Its subcellular location is the cytoplasm. It catalyses the reaction N(7)-methyl-GTP + H2O = N(7)-methyl-GMP + diphosphate + H(+). Its function is as follows. Nucleoside triphosphate pyrophosphatase that hydrolyzes 7-methyl-GTP (m(7)GTP). May have a dual role in cell division arrest and in preventing the incorporation of modified nucleotides into cellular nucleic acids. In Idiomarina loihiensis (strain ATCC BAA-735 / DSM 15497 / L2-TR), this protein is 7-methyl-GTP pyrophosphatase.